A 716-amino-acid chain; its full sequence is Segment polarity protein dishevelled homolog DVL-3 (716 aa).

One can recognise a DIX domain in the interval 1–82 (MGETKIIYHL…RVVSWLVSAE (82 aa)). Arg-27 carries the post-translational modification Omega-N-methylarginine. Phosphoserine occurs at positions 48 and 125. The disordered stretch occupies residues 85–235 (HPDPAPFCAD…VSRIERSSSF (151 aa)). Basic and acidic residues predominate over residues 142–156 (QRERPRRRDGPEHAT). The span at 175-190 (SSSTLMSSELETTSFF) shows a compositional bias: low complexity. Ser-192 carries the phosphoserine modification. The segment covering 199-212 (SRFSSSTEQSSASR) has biased composition (low complexity). Position 212 is an omega-N-methylarginine (Arg-212). Positions 213-226 (LMRRHKRRRRKQKV) are enriched in basic residues. The PDZ domain maps to 249 to 321 (TVTLNMEKYN…NDDAVRVLRE (73 aa)). Position 271 is an asymmetric dimethylarginine; by PRMT1; alternate (Arg-271). Residues Arg-271 and Arg-342 each carry the symmetric dimethylarginine; by PRMT7; alternate modification. Arg-342 is modified (omega-N-methylarginine; alternate). Residue Thr-346 is modified to Phosphothreonine. One can recognise a DEP domain in the interval 422 to 496 (PESGLEVRDR…SEQCYYIFGD (75 aa)). Residues 546–691 (PYNPHPGFPE…PPGRDLASVP (146 aa)) are disordered. Low complexity predominate over residues 565-581 (ASSQHSEGSRSSGSNRS). 2 stretches are compositionally biased toward basic and acidic residues: residues 582-595 (GSDR…KAGD) and 604-622 (ESDH…RAPS). At Arg-614 the chain carries Symmetric dimethylarginine; by PRMT7. The span at 653 to 682 (YGPPGVPPLYGPPMLMMPPPPAAMGPPGAP) shows a compositional bias: pro residues. Ser-697 is subject to Phosphoserine. At Arg-698 the chain carries Omega-N-methylarginine; alternate. At Arg-698 the chain carries Dimethylated arginine; alternate. The residue at position 700 (Ser-700) is a Phosphoserine.

It belongs to the DSH family. In terms of assembly, interacts (via the PDZ domain) with the C-terminal regions of VANGL1 and VANGL2. Interacts (via the region containing both the PDZ and DEP domains) with LRRFIP2; the DIX domain may inhibit this interaction. Interacts with CYLD, CEP164 and DAB2. Interacts with DCDC2. Interacts with FOXK1 and FOXK2. Interacts with DAAM2. Ubiquitinated. Deubiquitinated by CYLD, which acts on 'Lys-63'-linked ubiquitin chains. Post-translationally, phosphorylated by CSNK1D. In terms of processing, arginine methylation may function as a switch in regulation of function in Wnt signaling.

The protein localises to the cytoplasm. Its function is as follows. Involved in the signal transduction pathway mediated by multiple Wnt genes. The protein is Segment polarity protein dishevelled homolog DVL-3 (DVL3) of Homo sapiens (Human).